The primary structure comprises 566 residues: Type 2 DNA topoisomerase 6 subunit B (566 aa).

ATP is bound by residues Asn-48, Asp-80, 101–102, 111–118, and Lys-475; these read TK and GQQGIGIS.

It belongs to the TOP6B family. As to quaternary structure, homodimer. Heterotetramer of two Top6A and two Top6B chains.

It carries out the reaction ATP-dependent breakage, passage and rejoining of double-stranded DNA.. Relaxes both positive and negative superturns and exhibits a strong decatenase activity. In Thermococcus sibiricus (strain DSM 12597 / MM 739), this protein is Type 2 DNA topoisomerase 6 subunit B.